A 117-amino-acid chain; its full sequence is Immunoglobulin kappa variable 1-16 (117 aa).

The signal sequence occupies residues 1 to 22 (MDMRVLAQLLGLLLLCFPGARC). Residues 23–45 (DIQMTQSPSSLSASVGDRVTITC) form a framework-1 region. Positions 24-117 (IQMTQSPSSL…YYCQQYNSYP (94 aa)) constitute an Ig-like domain. A disulfide bond links C45 and C110. Residues 46–56 (RASQGISNYLA) are complementarity-determining-1. The segment at 57-71 (WFQQKPGKAPKSLIY) is framework-2. Residues 72-78 (AASSLQS) form a complementarity-determining-2 region. Residues 79–110 (GVPSKFSGSGSGTDFTLTISSLQPEDFATYYC) are framework-3. Positions 111–117 (QQYNSYP) are complementarity-determining-3.

In terms of assembly, immunoglobulins are composed of two identical heavy chains and two identical light chains; disulfide-linked.

The protein localises to the secreted. Its subcellular location is the cell membrane. V region of the variable domain of immunoglobulin light chains that participates in the antigen recognition. Immunoglobulins, also known as antibodies, are membrane-bound or secreted glycoproteins produced by B lymphocytes. In the recognition phase of humoral immunity, the membrane-bound immunoglobulins serve as receptors which, upon binding of a specific antigen, trigger the clonal expansion and differentiation of B lymphocytes into immunoglobulins-secreting plasma cells. Secreted immunoglobulins mediate the effector phase of humoral immunity, which results in the elimination of bound antigens. The antigen binding site is formed by the variable domain of one heavy chain, together with that of its associated light chain. Thus, each immunoglobulin has two antigen binding sites with remarkable affinity for a particular antigen. The variable domains are assembled by a process called V-(D)-J rearrangement and can then be subjected to somatic hypermutations which, after exposure to antigen and selection, allow affinity maturation for a particular antigen. In Homo sapiens (Human), this protein is Immunoglobulin kappa variable 1-16.